Reading from the N-terminus, the 115-residue chain is uncharacterized protein (115 aa).

3 helical membrane-spanning segments follow: residues 10 to 30 (IAIL…SFWL), 47 to 67 (ASGI…ATVA), and 77 to 97 (VHFF…AIIV).

It is found in the cell membrane. This is an uncharacterized protein from Mycoplasma genitalium (strain ATCC 33530 / DSM 19775 / NCTC 10195 / G37) (Mycoplasmoides genitalium).